The sequence spans 98 residues: MSLVYMNIMIAFLTSLLGLLMYRSHLMSSLLCLEGMMLSLFILSTIMILNIHFTLASMIPIILLVFAACEAAIGLSLLVMVSNTYGVDYVQNLNLLQC.

Helical transmembrane passes span 1-21 (MSLV…GLLM), 29-49 (SLLC…IMIL), and 61-81 (IILL…LVMV).

This sequence belongs to the complex I subunit 4L family. As to quaternary structure, core subunit of respiratory chain NADH dehydrogenase (Complex I) which is composed of 45 different subunits.

It localises to the mitochondrion inner membrane. The enzyme catalyses a ubiquinone + NADH + 5 H(+)(in) = a ubiquinol + NAD(+) + 4 H(+)(out). Functionally, core subunit of the mitochondrial membrane respiratory chain NADH dehydrogenase (Complex I) which catalyzes electron transfer from NADH through the respiratory chain, using ubiquinone as an electron acceptor. Part of the enzyme membrane arm which is embedded in the lipid bilayer and involved in proton translocation. The sequence is that of NADH-ubiquinone oxidoreductase chain 4L (MT-ND4L) from Mogera wogura (Japanese mole).